Reading from the N-terminus, the 880-residue chain is Tyrosine-protein kinase receptor TYRO3 (880 aa).

The N-terminal stretch at 1 to 28 (MVYPGPPGLIAGLLLAALSLSCVDGAKA) is a signal peptide. 2 consecutive Ig-like C2-type domains span residues 29 to 114 (LGFV…KSVS) and 125 to 206 (PYFT…AIVE). Residues 29–414 (LGFVGHGYNL…QRHPHTRMSW (386 aa)) lie on the Extracellular side of the membrane. 2 N-linked (GlcNAc...) asparagine glycosylation sites follow: Asn-37 and Asn-49. Cysteines 50 and 103 form a disulfide. The N-linked (GlcNAc...) asparagine glycan is linked to Asn-143. A disulfide bond links Cys-146 and Cys-189. 2 consecutive Fibronectin type-III domains span residues 213–306 (PPFN…TKET) and 311–401 (LPQN…SKEE). Residues Asn-216, Asn-279, Asn-351, and Asn-365 are each glycosylated (N-linked (GlcNAc...) asparagine). The helical transmembrane segment at 415-435 (VPMVLGILTALVTVVAMTLIF) threads the bilayer. Residues 436–880 (LRKGRKETRF…MQEEQVVITL (445 aa)) are Cytoplasmic-facing. Residues 503-774 (FTLGRTLGKG…VDLKQRLEAI (272 aa)) form the Protein kinase domain. Residues 509 to 517 (LGKGEFGSV) and Lys-535 contribute to the ATP site. The active-site Proton acceptor is the Asp-640. Tyr-671 carries the phosphotyrosine; by autocatalysis modification. Residues 846-880 (EWSSSAQNGEARGLLHEEEEEEEEEMQEEQVVITL) form a disordered region. Acidic residues predominate over residues 862 to 873 (EEEEEEEEEMQE).

Belongs to the protein kinase superfamily. Tyr protein kinase family. AXL/UFO subfamily. Tyrosine phosphorylated upon receptor stimulation. In terms of tissue distribution, detected in brain, spinal cord, intestine, lung, stomach, ovary, testis, skin and eye.

The protein resides in the cell membrane. It catalyses the reaction L-tyrosyl-[protein] + ATP = O-phospho-L-tyrosyl-[protein] + ADP + H(+). May be involved in cell adhesion processes, particularly in the central nervous system. The sequence is that of Tyrosine-protein kinase receptor TYRO3 (tyro3) from Xenopus laevis (African clawed frog).